We begin with the raw amino-acid sequence, 185 residues long: Ribosome-recycling factor (185 aa).

The protein belongs to the RRF family.

It is found in the cytoplasm. Responsible for the release of ribosomes from messenger RNA at the termination of protein biosynthesis. May increase the efficiency of translation by recycling ribosomes from one round of translation to another. The sequence is that of Ribosome-recycling factor from Histophilus somni (strain 2336) (Haemophilus somnus).